The chain runs to 518 residues: Chaperonin GroEL (518 aa).

Residues 30 to 33 (TLGP), Lys-51, 87 to 91 (DGTTT), and Gly-415 contribute to the ATP site.

It belongs to the chaperonin (HSP60) family. Forms a cylinder of 14 subunits composed of two heptameric rings stacked back-to-back. Interacts with the co-chaperonin GroES.

The protein resides in the cytoplasm. The catalysed reaction is ATP + H2O + a folded polypeptide = ADP + phosphate + an unfolded polypeptide.. Functionally, together with its co-chaperonin GroES, plays an essential role in assisting protein folding. The GroEL-GroES system forms a nano-cage that allows encapsulation of the non-native substrate proteins and provides a physical environment optimized to promote and accelerate protein folding. The sequence is that of Chaperonin GroEL from Desulfotalea psychrophila (strain LSv54 / DSM 12343).